The following is a 349-amino-acid chain: Core protein VP7 (349 aa).

An N-linked (GlcNAc...) asparagine; by host glycan is attached at asparagine 287.

This sequence belongs to the orbivirus VP7 family. As to quaternary structure, homotrimer that assemble in a complex of 260 capsomers on an inner scaffold composed of VP3.

The protein localises to the virion. The VP7 protein is one of the five proteins (with VP1, VP3, VP4, and VP6) which form the inner capsid of the virus. The chain is Core protein VP7 (Segment-7) from Antilocapra americana (Pronghorn).